A 548-amino-acid chain; its full sequence is MAAKDVKFGNDARVKMLRGVNVLADAVKVTLGPKGRNVVLDKSFGAPVITKDGVSVAREIELEDKFENMGAQMVKEVASKANDAAGDGTTTATVLAQSIVNEGLKAVAAGMNPMDLKRGIDKAVIAAVEELKKLSVPCSDSKAIAQVGTISANADETVGTLIAEAMAKVGKEGVITVEEGSGLQDELDVVEGMQFDRGYLSPYFVNKPETGAVELESPFILLADKKISNIREMLPVLEAVAKAGKPLLIIAEDVEGEALATLVVNTMRGIVKIAAVKAPGFGDRRKAMLQDIAILTAGTVISEEIGLELEKATLEDMGQAKRVVITKDTTTIIDGEGDKALIDSRVTQINQQRDEATSDYDREKLQERVAKLAGGVAVIKVGAATEVEMKEKKARVEDALHATRAAVEEGVVAGGGVALIRVANRIAELRGDNEDQNVGIKVARRAMEAPLRQIVANAGEEPSVIANKVKAGEGNTGYNAATEEYGNMIDMGILDPTKVTRSALQYAASIAGLMITTECMVTDLPKEDKPDLGGAGGMGGMGGMGGMM.

Residues 30–33 (TLGP), Lys51, 87–91 (DGTTT), Gly415, 479–481 (NAA), and Asp495 each bind ATP.

It belongs to the chaperonin (HSP60) family. In terms of assembly, forms a cylinder of 14 subunits composed of two heptameric rings stacked back-to-back. Interacts with the co-chaperonin GroES.

The protein resides in the cytoplasm. It catalyses the reaction ATP + H2O + a folded polypeptide = ADP + phosphate + an unfolded polypeptide.. Together with its co-chaperonin GroES, plays an essential role in assisting protein folding. The GroEL-GroES system forms a nano-cage that allows encapsulation of the non-native substrate proteins and provides a physical environment optimized to promote and accelerate protein folding. This Sodalis glossinidius (strain morsitans) protein is Chaperonin GroEL.